Consider the following 138-residue polypeptide: Small ribosomal subunit protein uS11c (138 aa).

Residues 1-25 are disordered; it reads MAKSIPRTGSRRNVRSGSRKSTRRI. The segment covering 9–25 has biased composition (basic residues); that stretch reads GSRRNVRSGSRKSTRRI.

This sequence belongs to the universal ribosomal protein uS11 family. As to quaternary structure, part of the 30S ribosomal subunit.

The protein localises to the plastid. Its subcellular location is the chloroplast. This Eucalyptus globulus subsp. globulus (Tasmanian blue gum) protein is Small ribosomal subunit protein uS11c.